Consider the following 276-residue polypeptide: Putative E3 ubiquitin-protein ligase SINA-like 9 (276 aa).

The RING-type zinc-finger motif lies at 38-74 (CPICCEALTSPIFQCDNGHLACGSCCPKLSNKCPACT). An SBD region spans residues 88 to 274 (VLESILIPCP…MQVFIIENVD (187 aa)). Residues 91 to 149 (SILIPCPNVRFGCTKSFFYGKESAHEKECIFSQCSCPSSVCDYTGSYKDLYAHYKLTHS) form an SIAH-type zinc finger. Zn(2+) is bound by residues Cys96, Cys103, His115, Cys119, Cys126, Cys131, His143, and His148.

The protein belongs to the SINA (Seven in absentia) family.

It catalyses the reaction S-ubiquitinyl-[E2 ubiquitin-conjugating enzyme]-L-cysteine + [acceptor protein]-L-lysine = [E2 ubiquitin-conjugating enzyme]-L-cysteine + N(6)-ubiquitinyl-[acceptor protein]-L-lysine.. The protein operates within protein modification; protein ubiquitination. In terms of biological role, E3 ubiquitin-protein ligase that mediates ubiquitination and subsequent proteasomal degradation of target proteins. E3 ubiquitin ligases accept ubiquitin from an E2 ubiquitin-conjugating enzyme in the form of a thioester and then directly transfers the ubiquitin to targeted substrates. It probably triggers the ubiquitin-mediated degradation of different substrates. This chain is Putative E3 ubiquitin-protein ligase SINA-like 9, found in Arabidopsis thaliana (Mouse-ear cress).